We begin with the raw amino-acid sequence, 214 residues long: Large ribosomal subunit protein uL3 (214 aa).

The tract at residues 136–156 is disordered; sequence THGNSLSHRAPGSIGQNQTPG. Gln153 carries the N5-methylglutamine modification.

Belongs to the universal ribosomal protein uL3 family. As to quaternary structure, part of the 50S ribosomal subunit. Forms a cluster with proteins L14 and L19. Post-translationally, methylated by PrmB.

In terms of biological role, one of the primary rRNA binding proteins, it binds directly near the 3'-end of the 23S rRNA, where it nucleates assembly of the 50S subunit. The chain is Large ribosomal subunit protein uL3 from Thioalkalivibrio sulfidiphilus (strain HL-EbGR7).